Here is a 434-residue protein sequence, read N- to C-terminus: MSTFQGEVTTLPPDKSISHRAALIGALAEGTTEISNFSGGYDNQSTLSVLRDAGISIRQEELSAGDGRIERRVVIESNGLWSFREPSVPLMCNNSGSTMRMMAGIMAAQPFRSELVGDASLMKRPMKRVADPLRQMGAEISLSDAGTAPVVIHGTKALKTIEYRLPVPSAQVKSLVAFAALHADGQSKIIEPIRSRDHTELMLGLATIDRPDGVREIIIDGRKPIAAKPFKVPADPSAACFMIALGLLGERSEIVLRNVCLNPTRVAYIDVLQEAGAGLGIENVRSEGGEPVGDIVVRSCSGLKPLRISDHGVVAGVIDEVPMLAVLSAFASGEFELHNAAELRTKESDRIDALVVNLQRLGFECEQYADGFVVKGRKTVASEEVEIECFDDHRIAMSFTIAAEAAGASLRLSDRDVAGVSFPNFFALIDSLRQ.

3-phosphoshikimate is bound by residues Lys15, Ser16, and Arg20. Lys15 contacts phosphoenolpyruvate. 2 residues coordinate phosphoenolpyruvate: Gly96 and Arg124. The 3-phosphoshikimate site is built by Ser169, Gln171, Ser195, Asp319, and Lys346. Position 171 (Gln171) interacts with phosphoenolpyruvate. The active-site Proton acceptor is Asp319. Phosphoenolpyruvate is bound by residues Arg350 and Arg394.

The protein belongs to the EPSP synthase family. As to quaternary structure, monomer.

Its subcellular location is the cytoplasm. It catalyses the reaction 3-phosphoshikimate + phosphoenolpyruvate = 5-O-(1-carboxyvinyl)-3-phosphoshikimate + phosphate. Its pathway is metabolic intermediate biosynthesis; chorismate biosynthesis; chorismate from D-erythrose 4-phosphate and phosphoenolpyruvate: step 6/7. Functionally, catalyzes the transfer of the enolpyruvyl moiety of phosphoenolpyruvate (PEP) to the 5-hydroxyl of shikimate-3-phosphate (S3P) to produce enolpyruvyl shikimate-3-phosphate and inorganic phosphate. In Chlorobaculum tepidum (strain ATCC 49652 / DSM 12025 / NBRC 103806 / TLS) (Chlorobium tepidum), this protein is 3-phosphoshikimate 1-carboxyvinyltransferase.